Here is a 183-residue protein sequence, read N- to C-terminus: Archaemetzincin (183 aa).

Residue His131 participates in Zn(2+) binding. The Proton acceptor role is filled by Glu132. His135, His141, Cys142, Cys147, Cys166, and Cys169 together coordinate Zn(2+).

This sequence belongs to the peptidase M54 family. As to quaternary structure, monomer. It depends on Zn(2+) as a cofactor.

Probable zinc metalloprotease whose natural substrate is unknown. In Saccharolobus islandicus (strain L.S.2.15 / Lassen #1) (Sulfolobus islandicus), this protein is Archaemetzincin.